The primary structure comprises 423 residues: 5-hydroxytryptamine receptor 1A-alpha (423 aa).

Topologically, residues 1–47 are extracellular; it reads MDLRATSSNDSNATSGYSDTAAVDWDEGENATGSGSLPDPELSYQII. N-linked (GlcNAc...) asparagine glycosylation is found at Asn9, Asn12, and Asn30. Residues 48–68 traverse the membrane as a helical segment; it reads TSLFLGALILCSIFGNSCVVA. At 69 to 82 the chain is on the cytoplasmic side; the sequence is AIALERSLQNVANY. A helical transmembrane segment spans residues 83–107; the sequence is LIGSLAVTDLMVSVLVLPMAALYQV. Topologically, residues 108–116 are extracellular; the sequence is LNKWTLGQD. The helical transmembrane segment at 117-141 threads the bilayer; the sequence is ICDLFIALDVLCCTSSILHLCAIAL. Cys118 and Cys196 form a disulfide bridge. Serotonin-binding residues include Asp125 and Cys129. The DRY motif; important for ligand-induced conformation changes motif lies at 142–144; that stretch reads DRY. The Cytoplasmic portion of the chain corresponds to 142-161; that stretch reads DRYWAITDPIDYVNKRTPRR. The helical transmembrane segment at 162-183 threads the bilayer; the sequence is AAVLISVTWLIGFSISIPPMLG. The Extracellular segment spans residues 184 to 202; sequence WRSAEDRANPDACIISQDP. The helical transmembrane segment at 203–225 threads the bilayer; that stretch reads GYTIYSTFGAFYIPLILMLVLYG. Residues 226-347 are Cytoplasmic-facing; it reads RIFKAARFRI…LARERKTVKT (122 aa). The segment at 311–332 is disordered; the sequence is LPLPNTPQSSSHENINEKTTGT. Polar residues predominate over residues 316-329; it reads TPQSSSHENINEKT. Ser320, Lys346, Thr347, and Gly353 together coordinate 1D-myo-inositol 4-phosphate. Residues 348-371 traverse the membrane as a helical segment; the sequence is LGIIMGTFIFCWLPFFIVALVLPF. Topologically, residues 372-379 are extracellular; the sequence is CAENCYMP. A helical membrane pass occupies residues 380 to 404; it reads EWLGAVINWLGYSNSLLNPIIYAYF. The NPxxY motif; important for ligand-induced conformation changes and signaling signature appears at 397-401; sequence NPIIY. Phe404, Asn405, and Lys406 together coordinate 1D-myo-inositol 4-phosphate. The Cytoplasmic segment spans residues 405 to 423; that stretch reads NKDFQSAFKKILRCKFHRH.

This sequence belongs to the G-protein coupled receptor 1 family. 5-hydroxytryptamine receptor subfamily.

The protein resides in the cell membrane. With respect to regulation, G-protein coupled receptor activity is regulated by lipids: phosphatidylinositol 4-phosphate increases HTR1A-mediated activity. G-protein coupled receptor for 5-hydroxytryptamine (serotonin). Also functions as a receptor for various drugs and psychoactive substances. Ligand binding causes a conformation change that triggers signaling via guanine nucleotide-binding proteins (G proteins) and modulates the activity of downstream effectors, such as adenylate cyclase. HTR1A is coupled to G(i)/G(o) G alpha proteins and mediates inhibitory neurotransmission: signaling inhibits adenylate cyclase activity and activates a phosphatidylinositol-calcium second messenger system that regulates the release of Ca(2+) ions from intracellular stores. Beta-arrestin family members regulate signaling by mediating both receptor desensitization and resensitization processes. The sequence is that of 5-hydroxytryptamine receptor 1A-alpha (htr1aa) from Takifugu rubripes (Japanese pufferfish).